The sequence spans 542 residues: DM7 family protein GG17591 (542 aa).

Residues 415–430 (GETQEMDEAHPTKEES) show a composition bias toward basic and acidic residues. Positions 415–443 (GETQEMDEAHPTKEESKSEEEGEVQSGSQ) are disordered.

This sequence belongs to the DM7 family.

This Drosophila erecta (Fruit fly) protein is DM7 family protein GG17591.